The sequence spans 119 residues: MRKRNISLKSKIEIQKIFKEGKLIRFSNLNLKMFYKSNHLVYSRILVTFSKGFRGSVKRNRIRRLFKEAFRKRLELLEGIALDIIFVVSYSKLTLTYFSIESLMKGLVLRCERGIGESK.

This sequence belongs to the RnpA family. Consists of a catalytic RNA component (M1 or rnpB) and a protein subunit.

The enzyme catalyses Endonucleolytic cleavage of RNA, removing 5'-extranucleotides from tRNA precursor.. In terms of biological role, RNaseP catalyzes the removal of the 5'-leader sequence from pre-tRNA to produce the mature 5'-terminus. It can also cleave other RNA substrates such as 4.5S RNA. The protein component plays an auxiliary but essential role in vivo by binding to the 5'-leader sequence and broadening the substrate specificity of the ribozyme. The protein is Ribonuclease P protein component of Borreliella burgdorferi (strain ZS7) (Borrelia burgdorferi).